The primary structure comprises 511 residues: 60 kDa neurofilament protein (511 aa).

Residues 1–32 (MSVTQKKTEISTTTTYEGESRPSSGMSGFSYS) are disordered. Residues 1–99 (MSVTQKKTEI…KANREREKQD (99 aa)) are head. Residues 21 to 30 (RPSSGMSGFS) show a composition bias toward polar residues. One can recognise an IF rod domain in the interval 96-449 (EKQDMRDLNE…KLLEGEESRV (354 aa)). Residues 100–135 (MRDLNERFANYIEKVRFLEAQNKKLAGELEELKSKW) are coil 1A. Residues 136–145 (GKETSAIKEM) form a linker 1 region. Positions 146–284 (YETELEEARK…VHAQELKELA (139 aa)) are coil 1B. The segment at 285–303 (ALAYRDTTAENREFWRNEL) is linker 12. The segment at 304-449 (AQAIRDIQQE…KLLEGEESRV (146 aa)) is coil 2. Residues 450–511 (GMKQIVEQVV…EEKKSMGSSD (62 aa)) form a tail region. The interval 479–511 (GYEATGGITTTTTTSSQERRSMSEEKKSMGSSD) is disordered. Positions 483 to 492 (TGGITTTTTT) are enriched in low complexity. The span at 495-511 (QERRSMSEEKKSMGSSD) shows a compositional bias: basic and acidic residues.

Belongs to the intermediate filament family.

Major squid neurofilament protein. The polypeptide is 60 kDa neurofilament protein (Doryteuthis pealeii (Longfin inshore squid)).